The primary structure comprises 626 residues: Nuclear RNA export factor 2 (626 aa).

Ser34 is subject to Phosphoserine. In terms of domain architecture, RRM spans 124 to 203; that stretch reads WFKVTIPYGI…IFVNHSTAPY (80 aa). 4 LRR repeats span residues 271 to 296, 297 to 320, 321 to 348, and 349 to 376; these read ELLS…EKAP, KVKT…VKGL, KLEE…AIRD, and CFPK…ETMK. Positions 391–541 constitute an NTF2 domain; sequence LVLQFLQQYY…LCIVNDELFV (151 aa). Positions 570 to 625 constitute a TAP-C domain; the sequence is QEQQEMVQAFSAQSGMKLEWSQKCLQDNEWNYTRAGQAFTMLQTEGKIPAEAFKQI.

The protein belongs to the NXF family. In terms of assembly, interacts with NXT1, NXT2, E1B-AP5, the REF proteins and with nucleoporins, Nup62, Nup153 and Nup214. Interacts with LUZP4. In terms of tissue distribution, expressed almost exclusively in testis. Also expressed in several cancers.

Its subcellular location is the nucleus. It localises to the nucleoplasm. It is found in the cytoplasm. Functionally, involved in the export of mRNA from the nucleus to the cytoplasm. The protein is Nuclear RNA export factor 2 (NXF2) of Homo sapiens (Human).